Here is a 332-residue protein sequence, read N- to C-terminus: ATPase GET3 (332 aa).

Residue 32-39 (KGGVGKTT) coordinates ATP. Residue Asp61 is part of the active site. Residues Glu235 and Asn262 each coordinate ATP. The Zn(2+) site is built by Cys273 and Cys276.

The protein belongs to the arsA ATPase family. Homodimer.

The protein resides in the cytoplasm. It localises to the endoplasmic reticulum. ATPase required for the post-translational delivery of tail-anchored (TA) proteins to the endoplasmic reticulum. Recognizes and selectively binds the transmembrane domain of TA proteins in the cytosol. This complex then targets to the endoplasmic reticulum by membrane-bound receptors, where the tail-anchored protein is released for insertion. This process is regulated by ATP binding and hydrolysis. ATP binding drives the homodimer towards the closed dimer state, facilitating recognition of newly synthesized TA membrane proteins. ATP hydrolysis is required for insertion. Subsequently, the homodimer reverts towards the open dimer state, lowering its affinity for the membrane-bound receptor, and returning it to the cytosol to initiate a new round of targeting. The sequence is that of ATPase GET3 from Mycosarcoma maydis (Corn smut fungus).